A 768-amino-acid chain; its full sequence is Kelch domain-containing protein 7A (768 aa).

The helical transmembrane segment at 12–29 (VVLSAAALLLVTVAYRLY) threads the bilayer. Residues 35-210 (PAQRWGGNAQ…PAPLQGSSDM (176 aa)) are disordered. Serine 77 carries the post-translational modification Phosphoserine. Positions 104-118 (TDRKSQRKGSGEERG) are enriched in basic and acidic residues. An N-linked (GlcNAc...) asparagine glycan is attached at asparagine 248. The disordered stretch occupies residues 304–352 (LTEVPSPRPPPRSLGTGAASGGQAGDTKGAAERAASPQPGPSPSTRGFS). The stretch at 319–365 (TGAASGGQAGDTKGAAERAASPQPGPSPSTRGFSRKESLLQIAENPE) is one Kelch 1 repeat. Serine 356 is modified (phosphoserine). The tract at residues 371 to 395 (DGFWLPAPPCPDPGALPGSGRSSQE) is disordered. Kelch repeat units follow at residues 483-529 (QYLV…ICSL), 532-580 (YLFV…ALDG), 581-623 (HLYA…ATAC), and 626-668 (EIFV…AVNG).

It is found in the membrane. This Pongo abelii (Sumatran orangutan) protein is Kelch domain-containing protein 7A (KLHDC7A).